Here is a 309-residue protein sequence, read N- to C-terminus: Lipoyl synthase (309 aa).

Residues cysteine 37, cysteine 42, cysteine 48, cysteine 67, cysteine 71, cysteine 74, and serine 281 each coordinate [4Fe-4S] cluster. The Radical SAM core domain occupies 53-270 (DGPGTATFML…RVAETEFGFL (218 aa)).

Belongs to the radical SAM superfamily. Lipoyl synthase family. [4Fe-4S] cluster is required as a cofactor.

It is found in the cytoplasm. It carries out the reaction [[Fe-S] cluster scaffold protein carrying a second [4Fe-4S](2+) cluster] + N(6)-octanoyl-L-lysyl-[protein] + 2 oxidized [2Fe-2S]-[ferredoxin] + 2 S-adenosyl-L-methionine + 4 H(+) = [[Fe-S] cluster scaffold protein] + N(6)-[(R)-dihydrolipoyl]-L-lysyl-[protein] + 4 Fe(3+) + 2 hydrogen sulfide + 2 5'-deoxyadenosine + 2 L-methionine + 2 reduced [2Fe-2S]-[ferredoxin]. It functions in the pathway protein modification; protein lipoylation via endogenous pathway; protein N(6)-(lipoyl)lysine from octanoyl-[acyl-carrier-protein]: step 2/2. In terms of biological role, catalyzes the radical-mediated insertion of two sulfur atoms into the C-6 and C-8 positions of the octanoyl moiety bound to the lipoyl domains of lipoate-dependent enzymes, thereby converting the octanoylated domains into lipoylated derivatives. The sequence is that of Lipoyl synthase from Natronomonas pharaonis (strain ATCC 35678 / DSM 2160 / CIP 103997 / JCM 8858 / NBRC 14720 / NCIMB 2260 / Gabara) (Halobacterium pharaonis).